An 814-amino-acid polypeptide reads, in one-letter code: DNA gyrase subunit A (814 aa).

The 468-residue stretch at 32 to 499 folds into the Topo IIA-type catalytic domain; that stretch reads LPDVRDGLKP…GVIEFREEDL (468 aa). Residue Y120 is the O-(5'-phospho-DNA)-tyrosine intermediate of the active site. Positions 526 to 532 match the GyrA-box motif; it reads QHRAGRG.

This sequence belongs to the type II topoisomerase GyrA/ParC subunit family. Heterotetramer, composed of two GyrA and two GyrB chains. In the heterotetramer, GyrA contains the active site tyrosine that forms a transient covalent intermediate with DNA, while GyrB binds cofactors and catalyzes ATP hydrolysis.

It is found in the cytoplasm. The catalysed reaction is ATP-dependent breakage, passage and rejoining of double-stranded DNA.. Functionally, a type II topoisomerase that negatively supercoils closed circular double-stranded (ds) DNA in an ATP-dependent manner to modulate DNA topology and maintain chromosomes in an underwound state. Negative supercoiling favors strand separation, and DNA replication, transcription, recombination and repair, all of which involve strand separation. Also able to catalyze the interconversion of other topological isomers of dsDNA rings, including catenanes and knotted rings. Type II topoisomerases break and join 2 DNA strands simultaneously in an ATP-dependent manner. In Dehalogenimonas lykanthroporepellens (strain ATCC BAA-1523 / JCM 15061 / BL-DC-9), this protein is DNA gyrase subunit A.